Reading from the N-terminus, the 467-residue chain is Chromosomal replication initiator protein DnaA (467 aa).

Residues 1-90 (MSLSLWQQCL…KPVTQTPQAA (90 aa)) are domain I, interacts with DnaA modulators. A domain II region spans residues 91 to 130 (VTSNVAAPAQVAQTQPQRAAPSMRSGWDNVPAPAEPTYRS). The interval 131–347 (NVNVKHTFDN…GALNRVIANA (217 aa)) is domain III, AAA+ region. Positions 175, 177, 178, and 179 each coordinate ATP. Residues 348–467 (NFTGRAITID…FSNLIRTLSS (120 aa)) are domain IV, binds dsDNA.

This sequence belongs to the DnaA family. As to quaternary structure, oligomerizes as a right-handed, spiral filament on DNA at oriC.

Its subcellular location is the cytoplasm. In terms of biological role, plays an essential role in the initiation and regulation of chromosomal replication. ATP-DnaA binds to the origin of replication (oriC) to initiate formation of the DNA replication initiation complex once per cell cycle. Binds the DnaA box (a 9 base pair repeat at the origin) and separates the double-stranded (ds)DNA. Forms a right-handed helical filament on oriC DNA; dsDNA binds to the exterior of the filament while single-stranded (ss)DNA is stabiized in the filament's interior. The ATP-DnaA-oriC complex binds and stabilizes one strand of the AT-rich DNA unwinding element (DUE), permitting loading of DNA polymerase. After initiation quickly degrades to an ADP-DnaA complex that is not apt for DNA replication. Binds acidic phospholipids. The chain is Chromosomal replication initiator protein DnaA from Escherichia coli (strain ATCC 8739 / DSM 1576 / NBRC 3972 / NCIMB 8545 / WDCM 00012 / Crooks).